Here is a 578-residue protein sequence, read N- to C-terminus: Forkhead box protein P1 (578 aa).

Residues 208–233 form a C2H2-type zinc finger; that stretch reads GVCKWPGCETICEDFPSFLKHLNSEH. Residues 250–271 are leucine-zipper; it reads VQQLELQLSKDKERLQAMMSHL. Positions 284 to 288 are ctbp1-binding; that stretch reads PLNLV. Over residues 293–305 the composition is skewed to polar residues; that stretch reads LSKTASEASPQSL. The interval 293-325 is disordered; it reads LSKTASEASPQSLPHTPTTPTAPLTPITQGPSV. Over residues 306-320 the composition is skewed to low complexity; sequence PHTPTTPTAPLTPIT. Positions 366-456 form a DNA-binding region, fork-head; sequence RPPFTYASLI…PQKISGSPTL (91 aa). Residues 511–578 form a disordered region; sequence MEHTSSNGSD…EDDPVNDDME (68 aa). A compositionally biased stretch (low complexity) spans 515–527; the sequence is SSNGSDSSPGRSP. The span at 568–578 shows a compositional bias: acidic residues; the sequence is YEDDPVNDDME.

Dimerization is required for DNA-binding. Isoform a, but not isoform b, interacts with ctbp1. In terms of tissue distribution, all isoforms show similar spatial expression. Localized to the animal hemisphere of early cleavage stage embryos. At tailbud stages, expressed in regions of the brain, eye and the splanchnic mesodermal layer of the lateral plate mesoderm surrounding the gut. At stage 35, expressed within the lens of the eye, in distinct regions of the head mesenchyme and in the area anterior to the gut. In the brain the anterior-most expression is restricted to the outer region of the mesencephalon. With ongoing development, additional expression is found in the curling gut.

It is found in the nucleus. Functionally, transcriptional repressor. This Xenopus laevis (African clawed frog) protein is Forkhead box protein P1.